We begin with the raw amino-acid sequence, 70 residues long: U2-agatoxin-Ao1d (70 aa).

An N-terminal signal peptide occupies residues 1-20; sequence MRAIIYLLLISAMVFSMTKA. Residues 21 to 34 constitute a propeptide that is removed on maturation; that stretch reads VPEEEGLQLSEDER. 3 disulfide bridges follow: cysteine 37/cysteine 53, cysteine 44/cysteine 58, and cysteine 52/cysteine 68. Leucine amide is present on leucine 69.

It belongs to the neurotoxin 01 (U2-agtx) family. Expressed by the venom gland.

The protein localises to the secreted. Insect active toxin causing rapid but reversible paralysis in crickets. No activity shown in mammals. Does not show effect on mammalian voltage-gated calcium channels. In Agelena orientalis (Funnel-web spider), this protein is U2-agatoxin-Ao1d.